A 232-amino-acid polypeptide reads, in one-letter code: DnaJ homolog subfamily B member 8 (232 aa).

Residues 3 to 69 (NYYEVLGVQA…KKRSLYDRAG (67 aa)) enclose the J domain.

In terms of assembly, interacts with histone deacetylases HDAC4, HDAC6, and SIRT2, HDAC activity is required for antiaggregation.

In terms of biological role, efficient suppressor of aggregation and toxicity of disease-associated polyglutamine proteins. The sequence is that of DnaJ homolog subfamily B member 8 (DNAJB8) from Homo sapiens (Human).